We begin with the raw amino-acid sequence, 246 residues long: uncharacterized protein (246 aa).

To M.jannaschii MJ1676.

This is an uncharacterized protein from Methanothermobacter thermautotrophicus (strain ATCC 29096 / DSM 1053 / JCM 10044 / NBRC 100330 / Delta H) (Methanobacterium thermoautotrophicum).